We begin with the raw amino-acid sequence, 359 residues long: DNA polymerase IV (359 aa).

The UmuC domain maps to 4-184 (IVHVDMDAFY…LPVNRIPGVG (181 aa)). Mg(2+) is bound by residues Asp-8 and Asp-102. The active site involves Glu-103.

Belongs to the DNA polymerase type-Y family. In terms of assembly, monomer. It depends on Mg(2+) as a cofactor.

The protein localises to the cytoplasm. The catalysed reaction is DNA(n) + a 2'-deoxyribonucleoside 5'-triphosphate = DNA(n+1) + diphosphate. Functionally, poorly processive, error-prone DNA polymerase involved in untargeted mutagenesis. Copies undamaged DNA at stalled replication forks, which arise in vivo from mismatched or misaligned primer ends. These misaligned primers can be extended by PolIV. Exhibits no 3'-5' exonuclease (proofreading) activity. May be involved in translesional synthesis, in conjunction with the beta clamp from PolIII. The protein is DNA polymerase IV of Xanthomonas campestris pv. campestris (strain 8004).